A 528-amino-acid chain; its full sequence is Keratin, type II cytoskeletal 78 (528 aa).

Positions 1-104 (MSLSPCRARR…DPQFQVVRTQ (104 aa)) are head. Residues 23 to 45 (VGRGRTGFSSRSLSSFGGCRGGS) are disordered. Residues 24–39 (GRGRTGFSSRSLSSFG) are compositionally biased toward low complexity. The interval 105-140 (ETQQIRVLNNQFASFIDKVRFLEQQNKVLETKWHLL) is coil 1A. In terms of domain architecture, IF rod spans 105-418 (ETQQIRVLNN…RLLEGEECRM (314 aa)). Residues 141 to 159 (QQQGLSDRPQGLESFFEAY) form a linker 1 region. Residues 160-252 (LVRLRTQLEE…LYEEELGQLQ (93 aa)) form a coil 1B region. Positions 253–275 (TQASDMSVVLSMDNNRCLDFRDL) are linker 12. The interval 276 to 415 (IAEVRARYEE…TYRRLLEGEE (140 aa)) is coil 2. The segment at 416–528 (CRMSGECASQ…ESSLKTSVTY (113 aa)) is tail.

Belongs to the intermediate filament family. In terms of assembly, heterotetramer of two type I and two type II keratins.

This Bos taurus (Bovine) protein is Keratin, type II cytoskeletal 78 (KRT78).